The primary structure comprises 171 residues: UPF0690 protein C1orf52 homolog A (171 aa).

Disordered regions lie at residues 1 to 56 (MAAE…GPDE) and 126 to 171 (NVYQ…KRKV). Residues 47–56 (EAKKLPGPDE) are compositionally biased toward basic and acidic residues. The segment covering 146 to 160 (EEEAQEDSPPSDDEQ) has biased composition (acidic residues).

Belongs to the UPF0690 family.

This is UPF0690 protein C1orf52 homolog A from Xenopus laevis (African clawed frog).